The sequence spans 328 residues: MRNPDTLGLWTKTMVALRRFTVLAIATVSVFLITDLGLPQAASAYPFWAQETAPLTPREATGRIVCANCHLAQKAAEVEIPQAVLPDTVFEAVVKIPYDLDSQQVLGDGSKGGLNVGAVLMLPEGFKIAPPDRLSEGLKEKVGGTYFQPYREDMENVVIVGPLPGEQYQEIVFPVLSPDPAKDKSINYGKFAVHLGANRGRGQIYPTGLLSNNNAFKAPNAGTISEVNALEAGGYQLILTTADGTETVDIPAGPELIVSAGQTVEAGEFLTNNPNVGGFGQKDTEVVLQNPTRIKFLVLFLAGIMLSQILLVLKKKQIEKVQAAELNF.

Positions 1-44 (MRNPDTLGLWTKTMVALRRFTVLAIATVSVFLITDLGLPQAASA) are cleaved as a signal peptide. Positions 45, 66, 69, and 70 each coordinate heme. A helical membrane pass occupies residues 296–313 (FLVLFLAGIMLSQILLVL).

This sequence belongs to the cytochrome f family. The 4 large subunits of the cytochrome b6-f complex are cytochrome b6, subunit IV (17 kDa polypeptide, PetD), cytochrome f and the Rieske protein, while the 4 small subunits are PetG, PetL, PetM and PetN. The complex functions as a dimer. Heme serves as cofactor.

The protein localises to the cellular thylakoid membrane. Functionally, component of the cytochrome b6-f complex, which mediates electron transfer between photosystem II (PSII) and photosystem I (PSI), cyclic electron flow around PSI, and state transitions. The protein is Cytochrome f (petA) of Synechocystis sp. (strain ATCC 27184 / PCC 6803 / Kazusa).